The chain runs to 93 residues: Alpha-defensin 13 (93 aa).

Residues 1-19 form the signal peptide; that stretch reads MKTLVLLSALVLLAFQVQA. A propeptide spanning residues 20 to 58 is cleaved from the precursor; it reads DPIQNTDEETKTEEQPGEEDQAVSVSFGDPEGTSLQEES. Positions 22–54 are disordered; it reads IQNTDEETKTEEQPGEEDQAVSVSFGDPEGTSL. Intrachain disulfides connect Cys-64–Cys-92, Cys-66–Cys-81, and Cys-71–Cys-91.

Belongs to the alpha-defensin family. In terms of tissue distribution, paneth cells of the small bowel.

The protein localises to the secreted. Functionally, probably contributes to the antimicrobial barrier function of the small bowel mucosa. This Mus musculus (Mouse) protein is Alpha-defensin 13 (Defa13).